We begin with the raw amino-acid sequence, 149 residues long: Transcription antitermination protein NusB (149 aa).

It belongs to the NusB family.

In terms of biological role, involved in transcription antitermination. Required for transcription of ribosomal RNA (rRNA) genes. Binds specifically to the boxA antiterminator sequence of the ribosomal RNA (rrn) operons. This chain is Transcription antitermination protein NusB, found in Sphingopyxis alaskensis (strain DSM 13593 / LMG 18877 / RB2256) (Sphingomonas alaskensis).